Consider the following 378-residue polypeptide: Histidine decarboxylase (378 aa).

H120 is a substrate binding site. K233 carries the N6-(pyridoxal phosphate)lysine modification. Residue S323 is part of the active site.

This sequence belongs to the group II decarboxylase family. As to quaternary structure, homotetramer. Requires pyridoxal 5'-phosphate as cofactor.

The enzyme catalyses L-histidine + H(+) = histamine + CO2. This Morganella morganii (Proteus morganii) protein is Histidine decarboxylase (hdc).